The primary structure comprises 190 residues: Cytidylate kinase (190 aa).

Residue 7 to 15 coordinates ATP; the sequence is GKIGSGKST.

It belongs to the cytidylate kinase family. Type 2 subfamily.

The protein resides in the cytoplasm. It carries out the reaction CMP + ATP = CDP + ADP. It catalyses the reaction dCMP + ATP = dCDP + ADP. This chain is Cytidylate kinase, found in Thermoplasma volcanium (strain ATCC 51530 / DSM 4299 / JCM 9571 / NBRC 15438 / GSS1).